A 99-amino-acid chain; its full sequence is uncharacterized protein (99 aa).

Residues 74–90 (FLSLPLGHSYLFLFCFW) traverse the membrane as a helical segment.

It is found in the membrane. This is an uncharacterized protein from Saccharomyces cerevisiae (strain ATCC 204508 / S288c) (Baker's yeast).